The following is a 221-amino-acid chain: Large ribosomal subunit protein uL4 (221 aa).

The disordered stretch occupies residues 45–100; sequence ARQGTHKTKNRGEVSGAGRKPFKQKGTGRARQGSIRAPQMTGGGIVHGPTPRDYSQ.

This sequence belongs to the universal ribosomal protein uL4 family. In terms of assembly, part of the 50S ribosomal subunit.

In terms of biological role, one of the primary rRNA binding proteins, this protein initially binds near the 5'-end of the 23S rRNA. It is important during the early stages of 50S assembly. It makes multiple contacts with different domains of the 23S rRNA in the assembled 50S subunit and ribosome. Its function is as follows. Forms part of the polypeptide exit tunnel. This Leifsonia xyli subsp. xyli (strain CTCB07) protein is Large ribosomal subunit protein uL4.